A 119-amino-acid polypeptide reads, in one-letter code: Large ribosomal subunit protein bL20 (119 aa).

The protein belongs to the bacterial ribosomal protein bL20 family.

Binds directly to 23S ribosomal RNA and is necessary for the in vitro assembly process of the 50S ribosomal subunit. It is not involved in the protein synthesizing functions of that subunit. This Laribacter hongkongensis (strain HLHK9) protein is Large ribosomal subunit protein bL20.